The sequence spans 713 residues: MTAPTVPADQHGHPLPGPADPAANDTWRPSRYREPLHPDNEEVLEQAAYQAAVTRSSGDDRKRKIKPRRTVDYQGGVQKWRMLNKLKGVHEFRPAIHPNPSDIVNFLPPVALRSNPSTSICDYWVHTSINKERSPTRVVRWTPDARRLLTGNDKGQFTLWNGASFNYESITQVHDDSIRSFTYSHNGQALVSADKGGTIKYFTPHLTNIHGFQGHREACHDVSWSPNDERFVTCGDDGLVKIWSYREAKEERSLSGHGWDVRCVDWHPTKGLIVSGSKDMLVKFWDPRTGKDLSTLHSSKSTINTCRWSPDGHLVATAGQDSVIRLFDIRTFRELEVLKGHEKEVNCIEWHPIHHSLLVSGDALGTINYFSLLSPTPSTPITTLSAAHEDAVFSLSFHPLGHILCSGSKDFTARFWCRARPPGGQEFDKWHLTEEGAAQKELERITKREWGTNALPANAAGGGGGGGGGDKQQVALPGLSNLVAAVNSVKTGPTTTGGGPPGLPGLGAPNVHAGTPPSRVSTPSSMGPPGAGAQGQAQGGQFPRGRAALPSQNDMLRHNHGPRGGFADRDRNGGGDRGGMDRDRDSRGGRQDPRGNQMYGRGPGGPPPGPPPGQGGYNYPPAPPNYPPYPPSSYPPPPNNQPGYPPAPNYAMPPGPGAPPQSYPYNRPPQGPPQNNNPGGQGNYGASASGGYGQYGGGGGGGGGGGYGRDGRR.

Residues 1 to 37 (MTAPTVPADQHGHPLPGPADPAANDTWRPSRYREPLH) form a disordered region. WD repeat units lie at residues 131–170 (KERS…YESI), 173–213 (VHDD…HGFQ), 214–253 (GHRE…EERS), 256–295 (GHGW…DLST), 298–337 (SSKS…ELEV), 340–380 (GHEK…PSTP), and 387–426 (AHED…GGQE). 2 disordered regions span residues 448–474 (REWG…KQQV) and 490–713 (KTGP…DGRR). The span at 460 to 470 (AGGGGGGGGGD) shows a compositional bias: gly residues. Residues 534–548 (QGQAQGGQFPRGRAA) show a composition bias toward low complexity. The span at 566-593 (FADRDRNGGGDRGGMDRDRDSRGGRQDP) shows a compositional bias: basic and acidic residues. 2 stretches are compositionally biased toward pro residues: residues 604-613 (GGPPPGPPPG) and 620-672 (PPAP…PQGP). Residues 679–713 (GGQGNYGASASGGYGQYGGGGGGGGGGGYGRDGRR) are compositionally biased toward gly residues.

It localises to the nucleus. In terms of biological role, required for 3'-end cleavage and polyadenylation of pre-mRNAs. Also involved in chromosome segregation where it has a role in chromosome attachment to the mitotic spindle. This is Polyadenylation factor subunit 2 (PFS2) from Cryptococcus neoformans var. neoformans serotype D (strain B-3501A) (Filobasidiella neoformans).